The chain runs to 162 residues: SCF ubiquitin ligase complex protein SKP1a (162 aa).

The residue at position 2 (serine 2) is an N-acetylserine. Residues 100 to 162 (ILAANYLDIK…NEWCEDKGGN (63 aa)) form an interaction with the F-box domain of F-box proteins region. Proline 143 bears the 4-hydroxyproline mark. Proline 143 carries O-linked (GlcNAc...) hydroxyproline glycosylation.

Belongs to the SKP1 family. In terms of assembly, multiprotein complex (SCF) with cullin and F-box-containing protein. Capable of undergoing aggregation. Post-translationally, O-linked glycan consists of linear Gal-Gal-Fuc-Gal-GlcNAc. FpaA and fpaB seem to be identically glycosylated. Glycosylation is required for nuclear enrichment. In terms of processing, hydroxylated by phyA.

Its subcellular location is the cytoplasm. It is found in the nucleus. This Dictyostelium discoideum (Social amoeba) protein is SCF ubiquitin ligase complex protein SKP1a (fpaA).